The chain runs to 173 residues: Protein PLASTID REDOX INSENSITIVE 2, chloroplastic (173 aa).

The transit peptide at 1 to 55 (MATRAWVAAAVALNPQLLPLRSCSPTKSVSPAQRSASMGLRLRSGRPCLGKFVCR) directs the protein to the chloroplast.

The protein localises to the plastid. It localises to the chloroplast stroma. The protein resides in the chloroplast nucleoid. Functionally, required for the activity of the plastid-encoded RNA polymerase (PEP) and full expression of genes transcribed by PEP. The protein is Protein PLASTID REDOX INSENSITIVE 2, chloroplastic of Zea mays (Maize).